A 361-amino-acid chain; its full sequence is Tegument protein UL51 homolog (361 aa).

Residue cysteine 8 is the site of S-palmitoyl cysteine; by host attachment. A disordered region spans residues 251–299 (GDEEDEVTVMSPSPEPVQQQPPVEPVQQQPQGRGSHRRRYKESAPQETL). Residues 266–281 (PVQQQPPVEPVQQQPQ) show a composition bias toward low complexity.

The protein belongs to the herpesviridae UL51 family. In terms of assembly, oligomerizes. Interacts with UL103; this interaction mediates UL103 incorporation to virions. Post-translationally, phosphorylated. In terms of processing, palmitoylation is necessary for Golgi localization.

The protein localises to the virion tegument. Its subcellular location is the host cytoplasm. It localises to the host Golgi apparatus. Plays several roles during the time course of infection, including egress of virus particles from the perinuclear space and secondary envelopment of cytoplasmic capsids that bud into specific trans-Golgi network (TGN)-derived membranes. The sequence is that of Tegument protein UL51 homolog (UL71) from Homo sapiens (Human).